The following is a 93-amino-acid chain: Putative pterin-4-alpha-carbinolamine dehydratase (93 aa).

Belongs to the pterin-4-alpha-carbinolamine dehydratase family.

It carries out the reaction (4aS,6R)-4a-hydroxy-L-erythro-5,6,7,8-tetrahydrobiopterin = (6R)-L-erythro-6,7-dihydrobiopterin + H2O. This Sulfurisphaera tokodaii (strain DSM 16993 / JCM 10545 / NBRC 100140 / 7) (Sulfolobus tokodaii) protein is Putative pterin-4-alpha-carbinolamine dehydratase.